Consider the following 346-residue polypeptide: Methylthioribose-1-phosphate isomerase (346 aa).

Substrate is bound by residues 54 to 56 (RGA), Arg-91, and Gln-192. The Proton donor role is filled by Asp-233. 243 to 244 (NK) contributes to the substrate binding site.

It belongs to the eIF-2B alpha/beta/delta subunits family. MtnA subfamily.

It carries out the reaction 5-(methylsulfanyl)-alpha-D-ribose 1-phosphate = 5-(methylsulfanyl)-D-ribulose 1-phosphate. It functions in the pathway amino-acid biosynthesis; L-methionine biosynthesis via salvage pathway; L-methionine from S-methyl-5-thio-alpha-D-ribose 1-phosphate: step 1/6. Its function is as follows. Catalyzes the interconversion of methylthioribose-1-phosphate (MTR-1-P) into methylthioribulose-1-phosphate (MTRu-1-P). The sequence is that of Methylthioribose-1-phosphate isomerase from Yersinia pseudotuberculosis serotype IB (strain PB1/+).